The sequence spans 243 residues: Phosphoribosylaminoimidazole-succinocarboxamide synthase (243 aa).

The protein belongs to the SAICAR synthetase family.

The enzyme catalyses 5-amino-1-(5-phospho-D-ribosyl)imidazole-4-carboxylate + L-aspartate + ATP = (2S)-2-[5-amino-1-(5-phospho-beta-D-ribosyl)imidazole-4-carboxamido]succinate + ADP + phosphate + 2 H(+). Its pathway is purine metabolism; IMP biosynthesis via de novo pathway; 5-amino-1-(5-phospho-D-ribosyl)imidazole-4-carboxamide from 5-amino-1-(5-phospho-D-ribosyl)imidazole-4-carboxylate: step 1/2. In Thermosynechococcus vestitus (strain NIES-2133 / IAM M-273 / BP-1), this protein is Phosphoribosylaminoimidazole-succinocarboxamide synthase.